We begin with the raw amino-acid sequence, 195 residues long: Interferon tau-6 (195 aa).

Residues 1-23 (MAFVLSLLMALVLVSYGPGGSLG) form the signal peptide. 2 disulfides stabilise this stretch: cysteine 24–cysteine 122 and cysteine 52–cysteine 162. N-linked (GlcNAc...) asparagine glycosylation occurs at asparagine 101.

Belongs to the alpha/beta interferon family. IFN-alphaII subfamily. In terms of tissue distribution, constitutively and exclusively expressed in the mononuclear cells of the extraembryonic trophectoderm.

The protein localises to the secreted. In terms of biological role, paracrine hormone primarily responsible for maternal recognition of pregnancy. Interacts with endometrial receptors, probably type I interferon receptors, and blocks estrogen receptor expression, preventing the estrogen-induced increase in oxytocin receptor expression in the endometrium. This results in the suppression of the pulsatile endometrial release of the luteolytic hormone prostaglandin F2-alpha, hindering the regression of the corpus luteum (luteolysis) and therefore a return to ovarian cyclicity. This, and a possible direct effect of IFN-tau on prostaglandin synthesis, leads in turn to continued ovarian progesterone secretion, which stimulates the secretion by the endometrium of the nutrients required for the growth of the conceptus. In summary, displays particularly high antiviral and antiproliferative potency concurrently with particular weak cytotoxicity, high antiluteolytic activity and immunomodulatory properties. In contrast with other IFNs, IFN-tau is not virally inducible. The sequence is that of Interferon tau-6 (IFNT6) from Ovis aries (Sheep).